A 279-amino-acid chain; its full sequence is Urease accessory protein UreD (279 aa).

This sequence belongs to the UreD family. As to quaternary structure, ureD, UreF and UreG form a complex that acts as a GTP-hydrolysis-dependent molecular chaperone, activating the urease apoprotein by helping to assemble the nickel containing metallocenter of UreC. The UreE protein probably delivers the nickel.

The protein resides in the cytoplasm. Required for maturation of urease via the functional incorporation of the urease nickel metallocenter. The chain is Urease accessory protein UreD from Brucella suis (strain ATCC 23445 / NCTC 10510).